Here is a 328-residue protein sequence, read N- to C-terminus: Methionyl-tRNA formyltransferase (328 aa).

Residue 121–124 (SLLP) coordinates (6S)-5,6,7,8-tetrahydrofolate.

This sequence belongs to the Fmt family.

It carries out the reaction L-methionyl-tRNA(fMet) + (6R)-10-formyltetrahydrofolate = N-formyl-L-methionyl-tRNA(fMet) + (6S)-5,6,7,8-tetrahydrofolate + H(+). In terms of biological role, attaches a formyl group to the free amino group of methionyl-tRNA(fMet). The formyl group appears to play a dual role in the initiator identity of N-formylmethionyl-tRNA by promoting its recognition by IF2 and preventing the misappropriation of this tRNA by the elongation apparatus. The chain is Methionyl-tRNA formyltransferase from Paraburkholderia xenovorans (strain LB400).